The chain runs to 635 residues: MQLLLIHSDYIEYETKKQTPVAEKIEESLKSCRLEEALTAFMAVESVDEANPEETIEKTVFEIEKVATQVKTDRIMLYPYAHLSSDLSSPKVAVKVFKGIETALSGKYEVKRAPFGWYKAFSISCKGHPLSELSRSIRPEGTQRAAGKVEAGKEKEEVVSEALKAEDTAKSYWRILTPDGELREIENFDLTPYPKLQQFVDYEISKSRAVERAPPHVELMRRLELADYEPGSDSGNMRYYPKGRLIKALLENYVLDVATDFGAMEVETPIMYDMNHPTLKKYLDRFPARQYSIESDKRQMFLRFAACFGQFLMNHDMTISYRNLPLRMIEMTRYSFRKEQRGELVGLRRLRAFTMPDMHSLCEDMDQAVDQFKKQYDLCIDVLENIGIHIKDYEVAIRFTKDFYESNKELIVNMARTVNKPVLVEMWDTRFFYFVLKFEFNFVDALAKASALSTVQIDVENAERYDISYVNADGKLERPTVLHCSPSGAIERCIYALLEKAAMETEEGKVPMLPVWLSPTQVRIVPISEKHVAFAEEVSQKLDCRVDIDDRDLSIGKKVREAGREWVPYVVVIGDKEIEDGTINVTIRAESEQKKPKKVQITPEELNDRIKGEIAGKPYRKLPLSKHLSGRPKFV.

Residues 1–144 are editing domain; the sequence is MQLLLIHSDY…RSIRPEGTQR (144 aa). The segment at 215–514 is catalytic; sequence PHVELMRRLE…TEEGKVPMLP (300 aa). 3 residues coordinate Zn(2+): Cys-307, His-359, and His-483.

This sequence belongs to the class-II aminoacyl-tRNA synthetase family. In terms of assembly, homodimer. The cofactor is Zn(2+).

The protein resides in the cytoplasm. It carries out the reaction tRNA(Thr) + L-threonine + ATP = L-threonyl-tRNA(Thr) + AMP + diphosphate + H(+). Catalyzes the attachment of threonine to tRNA(Thr) in a two-step reaction: L-threonine is first activated by ATP to form Thr-AMP and then transferred to the acceptor end of tRNA(Thr). Also edits incorrectly charged L-seryl-tRNA(Thr). The sequence is that of Threonine--tRNA ligase from Methanosarcina barkeri (strain Fusaro / DSM 804).